The primary structure comprises 88 residues: Large ribosomal subunit protein bL27 (88 aa).

Belongs to the bacterial ribosomal protein bL27 family.

This chain is Large ribosomal subunit protein bL27, found in Acidobacterium capsulatum (strain ATCC 51196 / DSM 11244 / BCRC 80197 / JCM 7670 / NBRC 15755 / NCIMB 13165 / 161).